The primary structure comprises 414 residues: 2,3-diketo-5-methylthiopentyl-1-phosphate enolase (414 aa).

The active-site Proton acceptor is the Lys99. Substrate-binding positions include Lys148, 174–177 (KDDE), His265, Gly338, and 360–361 (GG). Residues Lys174, Asp176, and Glu177 each coordinate Mg(2+). Lys174 bears the N6-carboxylysine mark.

It belongs to the RuBisCO large chain family. Type IV subfamily. In terms of assembly, homodimer. Mg(2+) is required as a cofactor.

It catalyses the reaction 5-methylsulfanyl-2,3-dioxopentyl phosphate = 2-hydroxy-5-methylsulfanyl-3-oxopent-1-enyl phosphate. It functions in the pathway amino-acid biosynthesis; L-methionine biosynthesis via salvage pathway; L-methionine from S-methyl-5-thio-alpha-D-ribose 1-phosphate: step 3/6. Catalyzes the enolization of 2,3-diketo-5-methylthiopentyl-1-phosphate (DK-MTP-1-P) into 2-hydroxy-3-keto-5-methylthiopentenyl-1-phosphate (HK-MTPenyl-1-P). This is 2,3-diketo-5-methylthiopentyl-1-phosphate enolase from Bacillus cereus (strain G9842).